The chain runs to 425 residues: Tol-Pal system protein TolB (425 aa).

A signal peptide spans 1–22 (MRNFLYCTGVLLLLWMSTSSQA).

It belongs to the TolB family. The Tol-Pal system is composed of five core proteins: the inner membrane proteins TolA, TolQ and TolR, the periplasmic protein TolB and the outer membrane protein Pal. They form a network linking the inner and outer membranes and the peptidoglycan layer.

The protein localises to the periplasm. In terms of biological role, part of the Tol-Pal system, which plays a role in outer membrane invagination during cell division and is important for maintaining outer membrane integrity. The chain is Tol-Pal system protein TolB from Nitrosomonas europaea (strain ATCC 19718 / CIP 103999 / KCTC 2705 / NBRC 14298).